Here is a 199-residue protein sequence, read N- to C-terminus: Twist-related protein 1 (199 aa).

Low complexity predominate over residues 1–18; sequence MMQDVSSSPVSPADDSLS. Positions 1-102 are disordered; the sequence is MMQDVSSSPV…GGGSPQSYEE (102 aa). The segment covering 34-43 has biased composition (basic residues); the sequence is RGGRKRRSSR. Composition is skewed to gly residues over residues 46–65 and 80–96; these read AGGG…GGDE and GCGG…GGGS. A bHLH domain is found at 105–156; it reads TQRVMANVRERQRTQSLNEAFAALRKIIPTLPSDKLSKIQTLKLAARYIDFL. A sufficient for transactivation activity region spans residues 158-188; the sequence is QVLQSDELDSKMASCSYVAHERLSYAFSVWR.

In terms of assembly, efficient DNA binding requires dimerization with another bHLH protein. Homodimer or heterodimer with E proteins such as TCF3. ID1 binds preferentially to TCF3 but does not interact efficiently with TWIST1 so ID1 levels control the amount of TCF3 available to dimerize with TWIST and thus determine the type of dimer formed.

It localises to the nucleus. Functionally, acts as a transcriptional regulator. Inhibits myogenesis by sequestrating E proteins, inhibiting trans-activation by MEF2, and inhibiting DNA-binding by MYOD1 through physical interaction. This interaction probably involves the basic domains of both proteins. Also represses expression of pro-inflammatory cytokines such as TNFA and IL1B. Regulates cranial suture patterning and fusion. Activates transcription as a heterodimer with E proteins. Regulates gene expression differentially, depending on dimer composition. Homodimers induce expression of FGFR2 and POSTN while heterodimers repress FGFR2 and POSTN expression and induce THBS1 expression. Heterodimerization is also required for osteoblast differentiation. Represses the activity of the circadian transcriptional activator: NPAS2-BMAL1 heterodimer. The protein is Twist-related protein 1 (TWIST1) of Microcebus murinus (Gray mouse lemur).